An 89-amino-acid chain; its full sequence is Small ribosomal subunit protein uS17 (89 aa).

This sequence belongs to the universal ribosomal protein uS17 family. In terms of assembly, part of the 30S ribosomal subunit.

In terms of biological role, one of the primary rRNA binding proteins, it binds specifically to the 5'-end of 16S ribosomal RNA. This is Small ribosomal subunit protein uS17 from Ralstonia pickettii (strain 12J).